An 80-amino-acid chain; its full sequence is Cytochrome c oxidase subunit 7B, mitochondrial (80 aa).

Residues 1 to 24 (MFPLVKSALNRLQVRSIQQTMARQ) constitute a mitochondrion transit peptide. The Mitochondrial matrix segment spans residues 25–32 (SHQKRTPD). Residues 33 to 59 (FHDKYGNAVLASGATFCIVTWTYVATQ) traverse the membrane as a helical segment. Residues 60-80 (VGIEWNLSPVGRVTPKEWRNQ) are Mitochondrial intermembrane-facing.

It belongs to the cytochrome c oxidase VIIb family. As to quaternary structure, component of the cytochrome c oxidase (complex IV, CIV), a multisubunit enzyme composed of 14 subunits. The complex is composed of a catalytic core of 3 subunits MT-CO1, MT-CO2 and MT-CO3, encoded in the mitochondrial DNA, and 11 supernumerary subunits COX4I1 (or COX4I2), COX5A, COX5B, COX6A1 (or COX6A2), COX6B1 (or COX6B2), COX6C, COX7A2 (or COX7A1), COX7B, COX7C, COX8A and NDUFA4, which are encoded in the nuclear genome. The complex exists as a monomer or a dimer and forms supercomplexes (SCs) in the inner mitochondrial membrane with NADH-ubiquinone oxidoreductase (complex I, CI) and ubiquinol-cytochrome c oxidoreductase (cytochrome b-c1 complex, complex III, CIII), resulting in different assemblies (supercomplex SCI(1)III(2)IV(1) and megacomplex MCI(2)III(2)IV(2)).

Its subcellular location is the mitochondrion inner membrane. It participates in energy metabolism; oxidative phosphorylation. Its function is as follows. Component of the cytochrome c oxidase, the last enzyme in the mitochondrial electron transport chain which drives oxidative phosphorylation. The respiratory chain contains 3 multisubunit complexes succinate dehydrogenase (complex II, CII), ubiquinol-cytochrome c oxidoreductase (cytochrome b-c1 complex, complex III, CIII) and cytochrome c oxidase (complex IV, CIV), that cooperate to transfer electrons derived from NADH and succinate to molecular oxygen, creating an electrochemical gradient over the inner membrane that drives transmembrane transport and the ATP synthase. Cytochrome c oxidase is the component of the respiratory chain that catalyzes the reduction of oxygen to water. Electrons originating from reduced cytochrome c in the intermembrane space (IMS) are transferred via the dinuclear copper A center (CU(A)) of subunit 2 and heme A of subunit 1 to the active site in subunit 1, a binuclear center (BNC) formed by heme A3 and copper B (CU(B)). The BNC reduces molecular oxygen to 2 water molecules using 4 electrons from cytochrome c in the IMS and 4 protons from the mitochondrial matrix. Plays a role in proper central nervous system (CNS) development in vertebrates. In Homo sapiens (Human), this protein is Cytochrome c oxidase subunit 7B, mitochondrial (COX7B).